Consider the following 142-residue polypeptide: Galactose-6-phosphate isomerase subunit LacA 2 (142 aa).

Belongs to the LacAB/RpiB family. As to quaternary structure, heteromultimeric protein consisting of LacA and LacB.

The enzyme catalyses aldehydo-D-galactose 6-phosphate = keto-D-tagatose 6-phosphate. It participates in carbohydrate metabolism; D-galactose 6-phosphate degradation; D-tagatose 6-phosphate from D-galactose 6-phosphate: step 1/1. This is Galactose-6-phosphate isomerase subunit LacA 2 from Streptococcus pyogenes serotype M3 (strain ATCC BAA-595 / MGAS315).